Consider the following 137-residue polypeptide: Ribosome-binding factor A (137 aa).

This sequence belongs to the RbfA family. As to quaternary structure, monomer. Binds 30S ribosomal subunits, but not 50S ribosomal subunits or 70S ribosomes.

The protein resides in the cytoplasm. In terms of biological role, one of several proteins that assist in the late maturation steps of the functional core of the 30S ribosomal subunit. Associates with free 30S ribosomal subunits (but not with 30S subunits that are part of 70S ribosomes or polysomes). Required for efficient processing of 16S rRNA. May interact with the 5'-terminal helix region of 16S rRNA. The polypeptide is Ribosome-binding factor A (Rhodopseudomonas palustris (strain TIE-1)).